A 493-amino-acid polypeptide reads, in one-letter code: Glutamyl-tRNA(Gln) amidotransferase subunit A (493 aa).

Residues Lys79 and Ser159 each act as charge relay system in the active site. The active-site Acyl-ester intermediate is the Ser183.

Belongs to the amidase family. GatA subfamily. In terms of assembly, heterotrimer of A, B and C subunits.

It carries out the reaction L-glutamyl-tRNA(Gln) + L-glutamine + ATP + H2O = L-glutaminyl-tRNA(Gln) + L-glutamate + ADP + phosphate + H(+). Allows the formation of correctly charged Gln-tRNA(Gln) through the transamidation of misacylated Glu-tRNA(Gln) in organisms which lack glutaminyl-tRNA synthetase. The reaction takes place in the presence of glutamine and ATP through an activated gamma-phospho-Glu-tRNA(Gln). In Brucella canis (strain ATCC 23365 / NCTC 10854 / RM-666), this protein is Glutamyl-tRNA(Gln) amidotransferase subunit A.